A 200-amino-acid chain; its full sequence is Imidazoleglycerol-phosphate dehydratase (200 aa).

This sequence belongs to the imidazoleglycerol-phosphate dehydratase family.

It is found in the cytoplasm. The catalysed reaction is D-erythro-1-(imidazol-4-yl)glycerol 3-phosphate = 3-(imidazol-4-yl)-2-oxopropyl phosphate + H2O. Its pathway is amino-acid biosynthesis; L-histidine biosynthesis; L-histidine from 5-phospho-alpha-D-ribose 1-diphosphate: step 6/9. In Chlorobium phaeobacteroides (strain BS1), this protein is Imidazoleglycerol-phosphate dehydratase.